Reading from the N-terminus, the 152-residue chain is Small ribosomal subunit protein bS16 (152 aa).

Residues 118–130 are compositionally biased toward basic and acidic residues; it reads AEKHKAKASEKKA. Residues 118–152 form a disordered region; sequence AEKHKAKASEKKAAAAASADEAGSAAADDAEGSES. Positions 131–144 are enriched in low complexity; it reads AAAASADEAGSAAA.

The protein belongs to the bacterial ribosomal protein bS16 family.

This Beutenbergia cavernae (strain ATCC BAA-8 / DSM 12333 / CCUG 43141 / JCM 11478 / NBRC 16432 / NCIMB 13614 / HKI 0122) protein is Small ribosomal subunit protein bS16.